The chain runs to 332 residues: 2,3-diketo-L-gulonate reductase (332 aa).

Residue histidine 44 is the Proton donor of the active site. NAD(+) is bound by residues 168 to 174 (ITMVDMS), 224 to 225 (WK), and 304 to 306 (GHE).

This sequence belongs to the LDH2/MDH2 oxidoreductase family. DlgD subfamily. As to quaternary structure, homodimer.

It is found in the cytoplasm. The catalysed reaction is 3-dehydro-L-gulonate + NAD(+) = 2,3-dioxo-L-gulonate + NADH + H(+). It catalyses the reaction 3-dehydro-L-gulonate + NADP(+) = 2,3-dioxo-L-gulonate + NADPH + H(+). Functionally, catalyzes the reduction of 2,3-diketo-L-gulonate in the presence of NADH, to form 3-keto-L-gulonate. The sequence is that of 2,3-diketo-L-gulonate reductase from Salmonella paratyphi B (strain ATCC BAA-1250 / SPB7).